The following is a 767-amino-acid chain: Transferrin receptor protein 1 (767 aa).

Residues 1-67 are Cytoplasmic-facing; it reads MDQARSAFSN…LTKPKRFNGS (67 aa). Phosphoserine occurs at positions 9 and 18. Tyr19 is subject to Phosphotyrosine. Positions 19–22 match the Endocytosis signal motif; that stretch reads YTRF. At Thr20 the chain carries Phosphothreonine. At Ser23 the chain carries Phosphoserine. The Stop-transfer sequence signature appears at 60–63; that stretch reads KPKR. Residues 68–88 form a helical; Signal-anchor for type II membrane protein membrane-spanning segment; that stretch reads FCYAVIAVIIFFLIGFMIGYL. A lipid anchor (S-palmitoyl cysteine) is attached at Cys69. The Extracellular portion of the chain corresponds to 89 to 767; it reads GYCKRVEPKS…GDIWDIDNEF (679 aa). Residues 96-110 show a composition bias toward basic and acidic residues; it reads PKSECGRSGDSKEIE. A disordered region spans residues 96–122; the sequence is PKSECGRSGDSKEIEGTEPPETEEYFP. The span at 111 to 121 shows a compositional bias: acidic residues; sequence GTEPPETEEYF. 3 N-linked (GlcNAc...) asparagine glycosylation sites follow: Asn211, Asn258, and Asn324. A PA domain is found at 230 to 320; the sequence is SKATTVTGKL…GTGDPYTPGF (91 aa). A ligand-binding region spans residues 576 to 767; that stretch reads TMDTYEVLSQ…GDIWDIDNEF (192 aa). Residues 653 to 655 carry the Cell attachment site motif; that stretch reads RGD. An N-linked (GlcNAc...) asparagine glycan is attached at Asn734.

Belongs to the peptidase M28 family. M28B subfamily. As to quaternary structure, homodimer; disulfide-linked. Binds one transferrin or HFE molecule per subunit. Interacts with SH3BP4. Interacts with STEAP3; facilitates TFRC endocytosis in erythroid precursor cells. In terms of processing, stearoylated by ZDHHC6 which inhibits TFRC-mediated activation of the JNK pathway and promotes mitochondrial fragmentation. Stearoylation does not affect iron uptake.

It is found in the cell membrane. The protein localises to the melanosome. Functionally, cellular uptake of iron occurs via receptor-mediated endocytosis of ligand-occupied transferrin receptor into specialized endosomes. Endosomal acidification leads to iron release. The apotransferrin-receptor complex is then recycled to the cell surface with a return to neutral pH and the concomitant loss of affinity of apotransferrin for its receptor. Transferrin receptor is necessary for development of erythrocytes and the nervous system. Positively regulates T and B cell proliferation through iron uptake. Acts as a lipid sensor that regulates mitochondrial fusion by regulating activation of the JNK pathway. When dietary levels of stearate (C18:0) are low, promotes activation of the JNK pathway, resulting in HUWE1-mediated ubiquitination and subsequent degradation of the mitofusin MFN2 and inhibition of mitochondrial fusion. When dietary levels of stearate (C18:0) are high, TFRC stearoylation inhibits activation of the JNK pathway and thus degradation of the mitofusin MFN2. Mediates uptake of NICOL1 into fibroblasts where it may regulate extracellular matrix production. The polypeptide is Transferrin receptor protein 1 (TFRC) (Equus caballus (Horse)).